The sequence spans 261 residues: Arcelin-5B (261 aa).

The signal sequence occupies residues 1–21; sequence MASSKLLSLALFLVLLTHANS. N-linked (GlcNAc...) asparagine glycans are attached at residues N91 and N100. C167 and C203 form a disulfide bridge.

It belongs to the leguminous lectin family. In terms of assembly, monomer.

Functionally, seed storage. This carbohydrate-binding lectin has toxic effects on bean bruchid pests. In Phaseolus vulgaris (Kidney bean), this protein is Arcelin-5B (ARC5B).